The sequence spans 338 residues: POU domain, class 4, transcription factor 3 (338 aa).

The POU-IV box motif lies at 56 to 65 (RAEALAAVDI). Positions 91–112 (TSPTVPISHPAALTSHPHHPVH) are disordered. Residues 179–256 (DVESDPRELE…VLQAWLEEAE (78 aa)) form the POU-specific domain. Residues 274–333 (RKRKRTSIAAPEKRSLEAYFAIQPRPSSEKIAAIAEKLDLKKNVVRVWFCNQRQKQKRMK) constitute a DNA-binding region (homeobox).

This sequence belongs to the POU transcription factor family. Interacts with ISL1. As to expression, expressed in the chochlea of the inner ear.

It localises to the nucleus. Its subcellular location is the cytoplasm. Its function is as follows. Acts as a transcriptional activator. Acts by binding to sequences related to the consensus octamer motif 5'-ATGCAAAT-3' in the regulatory regions of its target genes. Involved in the auditory system development, required for terminal differentiation of hair cells in the inner ear. The protein is POU domain, class 4, transcription factor 3 of Rattus norvegicus (Rat).